The sequence spans 634 residues: Chaperone protein HtpG (634 aa).

The segment at 1 to 342 (MTVETQKETL…SNDLSLNVSR (342 aa)) is a; substrate-binding. The interval 343–559 (EILQKDPIID…EQDLGLQMRQ (217 aa)) is b. The interval 560–634 (ILEASGQKVP…LNKLLVELSA (75 aa)) is c.

The protein belongs to the heat shock protein 90 family. As to quaternary structure, homodimer.

The protein localises to the cytoplasm. Functionally, molecular chaperone. Has ATPase activity. The polypeptide is Chaperone protein HtpG (Pseudomonas putida (strain ATCC 47054 / DSM 6125 / CFBP 8728 / NCIMB 11950 / KT2440)).